The sequence spans 381 residues: Ceropsin (381 aa).

At methionine 1–glycine 62 the chain is on the extracellular side. An N-linked (GlcNAc...) asparagine glycan is attached at asparagine 28. Residues phenylalanine 63 to phenylalanine 83 traverse the membrane as a helical segment. Topologically, residues methionine 84–leucine 96 are cytoplasmic. The chain crosses the membrane as a helical span at residues valine 97–isoleucine 117. Residues asparagine 118–leucine 133 lie on the Extracellular side of the membrane. An N-linked (GlcNAc...) asparagine glycan is attached at asparagine 121. Cysteine 131 and cysteine 208 are disulfide-bonded. The chain crosses the membrane as a helical span at residues tyrosine 134–phenylalanine 154. Over aspartate 155–glycine 173 the chain is Cytoplasmic. Residues alanine 174–phenylalanine 194 traverse the membrane as a helical segment. Over glycine 195–serine 221 the chain is Extracellular. Asparagine 204 is a glycosylation site (N-linked (GlcNAc...) asparagine). Residues tyrosine 222 to tyrosine 242 traverse the membrane as a helical segment. The Cytoplasmic segment spans residues tyrosine 243–lysine 284. A helical membrane pass occupies residues valine 285–tyrosine 305. Residues threonine 306–proline 316 are Extracellular-facing. Residues leucine 317–isoleucine 339 form a helical membrane-spanning segment. Over serine 340 to alanine 381 the chain is Cytoplasmic.

It belongs to the G-protein coupled receptor 1 family. Opsin subfamily. As to expression, expressed bilaterally in dorsal and ventral anterior protocerebral cells and bilaterally in the dorsal posterior protocerebral and lateral posterior tritocerebral cells (at protein level). Expressed in the larval brain but not in the subesophageal ganglion or thoracic ganglion.

The protein localises to the membrane. Visual pigments are the light-absorbing molecules that mediate vision. They consist of an apoprotein, opsin, covalently linked to cis-retinal. May play a role in photoperiodic photoreception. This is Ceropsin from Bombyx mori (Silk moth).